The following is a 290-amino-acid chain: Arylamine N-acetyltransferase 2 (290 aa).

Cysteine 68 serves as the catalytic Acyl-thioester intermediate. Serine 103 and glycine 104 together coordinate CoA. 106–107 (IH) is a substrate binding site. Catalysis depends on residues histidine 107 and aspartate 122. Residue tyrosine 208 coordinates CoA.

The protein belongs to the arylamine N-acetyltransferase family.

Its subcellular location is the cytoplasm. It catalyses the reaction an arylamine + acetyl-CoA = an N-acetylarylamine + CoA. The enzyme catalyses an N-hydroxyarylamine + acetyl-CoA = an N-acetoxyarylamine + CoA. Catalyzes the N- or O-acetylation of various arylamine and heterocyclic amine substrates. Participates in the detoxification of a plethora of hydrazine and arylamine drugs. The sequence is that of Arylamine N-acetyltransferase 2 (Nat2) from Rattus norvegicus (Rat).